Here is a 309-residue protein sequence, read N- to C-terminus: Anamorsin (309 aa).

Positions 6 to 172 are N-terminal SAM-like domain; it reads ISPGQLVAVF…KPNFEVGSSS (167 aa). The linker stretch occupies residues 173 to 222; that stretch reads QLKLPNKKSSSVKPVVDPAAAKLWTLSANDMEDDSVDLIDSDELLDPEDL. Phosphoserine is present on residues S182, S183, and S213. 4 residues coordinate [2Fe-2S] cluster: C235, C244, C247, and C249. Positions 235 to 249 are fe-S binding site A; it reads CGEGKKRKACKNCTC. S269 carries the phosphoserine modification. [4Fe-4S] cluster-binding residues include C271, C274, C282, and C285. Short sequence motifs (cx2C motif) lie at residues 271–274 and 282–285; these read CGNC and CANC. The fe-S binding site B stretch occupies residues 271–285; that stretch reads CGNCYLGDAFRCANC. Phosphoserine is present on residues S302 and S304.

This sequence belongs to the anamorsin family. As to quaternary structure, monomer. Interacts with NDOR1. Interacts with CHCHD4. [2Fe-2S] cluster serves as cofactor. The cofactor is [4Fe-4S] cluster.

Its subcellular location is the cytoplasm. The protein localises to the nucleus. It is found in the mitochondrion intermembrane space. Functionally, component of the cytosolic iron-sulfur (Fe-S) protein assembly (CIA) machinery required for the maturation of extramitochondrial Fe-S proteins. Part of an electron transfer chain functioning in an early step of cytosolic Fe-S biogenesis, facilitating the de novo assembly of a [4Fe-4S] cluster on the scaffold complex NUBP1-NUBP2. Electrons are transferred to CIAPIN1 from NADPH via the FAD- and FMN-containing protein NDOR1. NDOR1-CIAPIN1 are also required for the assembly of the diferric tyrosyl radical cofactor of ribonucleotide reductase (RNR), probably by providing electrons for reduction during radical cofactor maturation in the catalytic small subunit. Has anti-apoptotic effects in the cell. Involved in negative control of cell death upon cytokine withdrawal. Promotes development of hematopoietic cells. The sequence is that of Anamorsin from Mus musculus (Mouse).